The chain runs to 530 residues: Type 2 DNA topoisomerase 6 subunit B (530 aa).

ATP contacts are provided by residues Asn-42, Asp-76, 97–98 (SK), 106–113 (GMYGLGVK), and Lys-427.

This sequence belongs to the TOP6B family. Homodimer. Heterotetramer of two Top6A and two Top6B chains.

The catalysed reaction is ATP-dependent breakage, passage and rejoining of double-stranded DNA.. Its function is as follows. Relaxes both positive and negative superturns and exhibits a strong decatenase activity. This is Type 2 DNA topoisomerase 6 subunit B from Saccharolobus islandicus (strain Y.N.15.51 / Yellowstone #2) (Sulfolobus islandicus).